We begin with the raw amino-acid sequence, 165 residues long: MPEHLNARVEACYRQAEDFFQRTFPRPTVSFRLRGQKAGVAHLDENLLRFNPQLYRENREHFLEQTVAHEVAHLIAHQLFGPRIRPHGEEWQLIMRGIYGLPPDRCHTYAVKRRTATRYLYRCHCPEHNDFPFSAQRHNLVAKGRRYYCRRCKATLVFSGEVTRD.

The SprT-like domain occupies 10–157; that stretch reads EACYRQAEDF…YCRRCKATLV (148 aa). Zn(2+) is bound at residue His-69. Residue Glu-70 is part of the active site. His-73 contributes to the Zn(2+) binding site.

The protein belongs to the SprT family. Zn(2+) serves as cofactor.

The protein resides in the cytoplasm. This is Protein SprT from Pseudomonas paraeruginosa (strain DSM 24068 / PA7) (Pseudomonas aeruginosa (strain PA7)).